Here is a 112-residue protein sequence, read N- to C-terminus: Na(+)/H(+) antiporter subunit C (112 aa).

A run of 3 helical transmembrane segments spans residues L4 to L21, V28 to Q50, and Q70 to Y92.

It belongs to the CPA3 antiporters (TC 2.A.63) subunit C family. As to quaternary structure, forms a heterooligomeric complex that consists of seven subunits: MrpA, MrpB, MrpC, MrpD, MrpE, MrpF and MrpG.

Its subcellular location is the cell membrane. Mnh complex is a Na(+)Li(+)/H(+) antiporter involved in Na(+) and/or Li(+) excretion and Na(+) resistance. Na(+)/H(+) antiport consumes a transmembrane electrical potential, and is thus inferred to be electrogenic. Does not transport K(+), Ca(2+) or Mg(2+). The protein is Na(+)/H(+) antiporter subunit C (mrpC) of Alkalihalophilus pseudofirmus (strain ATCC BAA-2126 / JCM 17055 / OF4) (Bacillus pseudofirmus).